A 207-amino-acid polypeptide reads, in one-letter code: Uracil phosphoribosyltransferase (207 aa).

5-phospho-alpha-D-ribose 1-diphosphate-binding positions include Arg-77, Arg-102, and 129-137 (DPMLATGGS). Residues Ile-192 and 197–199 (GDA) contribute to the uracil site. Asp-198 is a 5-phospho-alpha-D-ribose 1-diphosphate binding site.

The protein belongs to the UPRTase family. Requires Mg(2+) as cofactor.

The catalysed reaction is UMP + diphosphate = 5-phospho-alpha-D-ribose 1-diphosphate + uracil. The protein operates within pyrimidine metabolism; UMP biosynthesis via salvage pathway; UMP from uracil: step 1/1. With respect to regulation, allosterically activated by GTP. Its function is as follows. Catalyzes the conversion of uracil and 5-phospho-alpha-D-ribose 1-diphosphate (PRPP) to UMP and diphosphate. This is Uracil phosphoribosyltransferase from Mycobacterium marinum (strain ATCC BAA-535 / M).